Here is a 22-residue protein sequence, read N- to C-terminus: NDMA-dependent alcohol dehydrogenase (22 aa).

Belongs to the zinc-containing alcohol dehydrogenase family. Homotetramer. Requires NADH as cofactor.

It localises to the cytoplasm. The catalysed reaction is N,N-dimethyl-4-nitrosoaniline + a primary alcohol = 4-(hydroxylamino)-N,N-dimethylaniline + an aldehyde. The enzyme catalyses ethanol + A = acetaldehyde + AH2. In terms of biological role, this is a novel enzyme, catalytically different from common alcohol dehydrogenases. It is effective in oxidizing ethanol, other primary alcohols and benzylalcohol only in the presence of p-nitroso-N,N-dimethylaniline (NDMA) as an electron acceptor. NADH acts as a cofactor here instead of as a coenzyme. This is NDMA-dependent alcohol dehydrogenase from Rhodococcus erythropolis (Arthrobacter picolinophilus).